The chain runs to 631 residues: Probable methyltransferase PMT16 (631 aa).

Residues 1 to 14 (MNLFTRISSRTKKA) lie on the Cytoplasmic side of the membrane. The chain crosses the membrane as a helical; Signal-anchor for type II membrane protein span at residues 15-35 (NLYYVTLVALLCIASYLLGIW). Residues 36 to 631 (QNTAVNPRAA…EDKNNTSALS (596 aa)) lie on the Lumenal side of the membrane. N61, N230, and N626 each carry an N-linked (GlcNAc...) asparagine glycan.

Belongs to the methyltransferase superfamily.

Its subcellular location is the endoplasmic reticulum membrane. The sequence is that of Probable methyltransferase PMT16 from Arabidopsis thaliana (Mouse-ear cress).